Consider the following 274-residue polypeptide: 2,3,4,5-tetrahydropyridine-2,6-dicarboxylate N-succinyltransferase (274 aa).

The substrate site is built by arginine 103 and aspartate 140.

It belongs to the transferase hexapeptide repeat family. As to quaternary structure, homotrimer.

It localises to the cytoplasm. It carries out the reaction (S)-2,3,4,5-tetrahydrodipicolinate + succinyl-CoA + H2O = (S)-2-succinylamino-6-oxoheptanedioate + CoA. It functions in the pathway amino-acid biosynthesis; L-lysine biosynthesis via DAP pathway; LL-2,6-diaminopimelate from (S)-tetrahydrodipicolinate (succinylase route): step 1/3. The protein is 2,3,4,5-tetrahydropyridine-2,6-dicarboxylate N-succinyltransferase of Actinobacillus pleuropneumoniae serotype 5b (strain L20).